The following is a 390-amino-acid chain: Zinc finger protein 121 (390 aa).

The segment at 88–110 adopts a C2H2-type 1; degenerate zinc-finger fold; the sequence is FEYSDCEEAFVDQSHLQANRITH. The C2H2-type 2; degenerate zinc-finger motif lies at 116–138; sequence YEQKQCGRAFTYSTSHAVSVKMH. 9 C2H2-type zinc fingers span residues 144–166, 172–194, 200–222, 228–250, 256–278, 284–306, 312–334, 340–362, and 368–390; these read YECK…MRTH, YECK…VRIH, YQCK…VRIH, YECN…FKTH, FECK…FRIH, YKCK…VKIH, YECK…IRTH, YICK…VRIH, and YICN…LKTH.

This sequence belongs to the krueppel C2H2-type zinc-finger protein family.

Its subcellular location is the nucleus. May be involved in transcriptional regulation. The chain is Zinc finger protein 121 (ZNF121) from Homo sapiens (Human).